Consider the following 367-residue polypeptide: Chorismate synthase (367 aa).

NADP(+) is bound by residues Arg-48 and Arg-54. FMN is bound by residues 125–127 (RSS), 238–239 (NA), Gly-278, 293–297 (KPTSS), and Arg-319.

The protein belongs to the chorismate synthase family. In terms of assembly, homotetramer. The cofactor is FMNH2.

It carries out the reaction 5-O-(1-carboxyvinyl)-3-phosphoshikimate = chorismate + phosphate. It functions in the pathway metabolic intermediate biosynthesis; chorismate biosynthesis; chorismate from D-erythrose 4-phosphate and phosphoenolpyruvate: step 7/7. Functionally, catalyzes the anti-1,4-elimination of the C-3 phosphate and the C-6 proR hydrogen from 5-enolpyruvylshikimate-3-phosphate (EPSP) to yield chorismate, which is the branch point compound that serves as the starting substrate for the three terminal pathways of aromatic amino acid biosynthesis. This reaction introduces a second double bond into the aromatic ring system. This chain is Chorismate synthase, found in Xanthomonas campestris pv. campestris (strain 8004).